The sequence spans 518 residues: Retinal dehydrogenase 2 (518 aa).

Residues 184-186 (IPW), 210-213 (KPAE), and 264-266 (STE) contribute to the NAD(+) site. The active-site Proton acceptor is Glu286. Catalysis depends on Cys320, which acts as the Nucleophile. Residues 366 to 370 (KQYNK) and Glu417 each bind NAD(+).

The protein belongs to the aldehyde dehydrogenase family. In terms of assembly, homotetramer.

Its subcellular location is the cytoplasm. The enzyme catalyses retinal + NAD(+) + H2O = retinoate + NADH + 2 H(+). It carries out the reaction all-trans-retinal + NAD(+) + H2O = all-trans-retinoate + NADH + 2 H(+). It catalyses the reaction all-trans-13,14-dihydroretinal + NAD(+) + H2O = all-trans-13,14-dihydroretinoate + NADH + 2 H(+). Its pathway is cofactor metabolism; retinol metabolism. Functionally, catalyzes the NAD-dependent oxidation of aldehyde substrates, such as all-trans-retinal and all-trans-13,14-dihydroretinal, to their corresponding carboxylic acids, all-trans-retinoate and all-trans-13,14-dihydroretinoate, respectively. Retinoate signaling is critical for the transcriptional control of many genes, for instance it is crucial for initiation of meiosis in both male and female. Recognizes retinal as substrate, both in its free form and when bound to cellular retinol-binding protein. Lacks activity with benzaldehyde, acetaldehyde and octanal. Displays complete lack of activity with citral. This chain is Retinal dehydrogenase 2 (ALDH1A2), found in Gallus gallus (Chicken).